We begin with the raw amino-acid sequence, 645 residues long: MAKEKRILDLEKTIKKHQDLYYNAQPEISDAEFDALWDELKALDPQNKLFFTVPLESTEGFAKSEHIIPMGSQEKAADPPSFEAWALKMPFKEYIVQYKMDGASLELQYEEGHFVRAVTRGDGKIGDDITENVLKMKGLIKDITVNAGPAYGTKPFSGGIRCEVIMLRSIHQKYFKDKANCRNAANGLMKKKNGELCEHLNLFAYDAVQGSIGRPFTGDAPFKTESEKLVWLKKAGFNCVEVKYCKSIAEVIEYRAHVMDIRPSLDYDIDGLVIKNDTIDPEDMKRARPEKQIAFKFSLEEAVTVLKEIEWSESGATYTPIALIEPVRLAGTTVKRASLANPNIIKALNLKIGSRVVVTKRGEIIPKIEALAENPPNVKEIEYPDTCSVCGSPLTNEGTRLYCPNMSCPKLIHHRIEKWISVLDIRDFGITLIKRLFEMGRVNSITDLYTLTVEELAAIDRMGKLSAEKVYKALHSKKEISLTEFIAGFDIEGIGETMVEKLEEAGFNDLNELLGASEADFANVYQFGQVLSHTLVTNLSILKDEMTGLIDKGYIKIKPPLTSEEGAVLKGLSFCFTGELNTMKRAQAEALVKEKGGTVKSSVVKGLSYLVTNTPDSGSSKNKKAQELGTAIITEEAFLNLIGKV.

NAD(+)-binding positions include 30 to 34 and 72 to 73; these read DAEFD and SQ. The active-site N6-AMP-lysine intermediate is Lys99. NAD(+)-binding residues include Arg120, Glu163, Lys275, and Lys296. 4 residues coordinate Zn(2+): Cys387, Cys390, Cys403, and Cys408. In terms of domain architecture, BRCT spans 564–645; the sequence is EEGAVLKGLS…EAFLNLIGKV (82 aa).

This sequence belongs to the NAD-dependent DNA ligase family. LigA subfamily. The cofactor is Mg(2+). Mn(2+) is required as a cofactor.

It carries out the reaction NAD(+) + (deoxyribonucleotide)n-3'-hydroxyl + 5'-phospho-(deoxyribonucleotide)m = (deoxyribonucleotide)n+m + AMP + beta-nicotinamide D-nucleotide.. Its function is as follows. DNA ligase that catalyzes the formation of phosphodiester linkages between 5'-phosphoryl and 3'-hydroxyl groups in double-stranded DNA using NAD as a coenzyme and as the energy source for the reaction. It is essential for DNA replication and repair of damaged DNA. The protein is DNA ligase of Treponema denticola (strain ATCC 35405 / DSM 14222 / CIP 103919 / JCM 8153 / KCTC 15104).